The following is a 78-amino-acid chain: Small ribosomal subunit protein bS18 (78 aa).

This sequence belongs to the bacterial ribosomal protein bS18 family. As to quaternary structure, part of the 30S ribosomal subunit. Forms a tight heterodimer with protein bS6.

Its function is as follows. Binds as a heterodimer with protein bS6 to the central domain of the 16S rRNA, where it helps stabilize the platform of the 30S subunit. In Nocardioides sp. (strain ATCC BAA-499 / JS614), this protein is Small ribosomal subunit protein bS18.